The primary structure comprises 58 residues: Small integral membrane protein 11 (58 aa).

The helical transmembrane segment at 10–32 (PLLLYILAAKTLILCLTFAGVKM) threads the bilayer. Positions 29-58 (GVKMYQRKRLEAKQQKLEAERKKQSEKKDN) form a coiled coil.

Expressed in heart, spleen, liver, stomach, muscle, lung, testis, skin, PBL and bone marrow.

Its subcellular location is the membrane. The polypeptide is Small integral membrane protein 11 (Homo sapiens (Human)).